Consider the following 436-residue polypeptide: tRNA (guanine(37)-N(1))-methyltransferase 1 (436 aa).

S-adenosyl-L-methionine contacts are provided by residues histidine 229, 277-278 (DL), and asparagine 325.

This sequence belongs to the class I-like SAM-binding methyltransferase superfamily. TRM5/TYW2 family. As to quaternary structure, monomer.

The protein resides in the mitochondrion matrix. It localises to the nucleus. It is found in the cytoplasm. It catalyses the reaction guanosine(37) in tRNA + S-adenosyl-L-methionine = N(1)-methylguanosine(37) in tRNA + S-adenosyl-L-homocysteine + H(+). Specifically methylates the N1 position of guanosine-37 in various cytoplasmic and mitochondrial tRNAs. Methylation is not dependent on the nature of the nucleoside 5' of the target nucleoside. This is the first step in the biosynthesis of wybutosine (yW), a modified base adjacent to the anticodon of tRNAs and required for accurate decoding. This chain is tRNA (guanine(37)-N(1))-methyltransferase 1, found in Phaeodactylum tricornutum (strain CCAP 1055/1).